Consider the following 137-residue polypeptide: Large ribosomal subunit protein bL21 (137 aa).

The segment at 1–26 (MADTKTATPATDAEEATATPPAAAPS) is disordered.

The protein belongs to the bacterial ribosomal protein bL21 family. As to quaternary structure, part of the 50S ribosomal subunit. Contacts protein L20.

This protein binds to 23S rRNA in the presence of protein L20. The protein is Large ribosomal subunit protein bL21 of Parasynechococcus marenigrum (strain WH8102).